Reading from the N-terminus, the 564-residue chain is MAVLPESRRLSLLLMAACFLLQALSAHAITRHYKFNVVMRNMTRLCSTKPILTVNGKFPGPTLYAREGDNVLVKVVNHVAHNVTIHWHGVRQIRTGWYDGPAYITQCPIQPGSSFLYNFTITGQRGTLLWHAHINWLRATVHGAIVILPKLGVPYPFPAPHKEAVIVLGEWWKEDTETVINQAMQLGVGPNISDSHTINGHPGPLSECASSQDGFKLSVENGKTYMLRIINAALNDDLFFKVAGHELTVVEVDAVYTKPFKTDTLLITPGQTTNVLVRANQGAGRYLLSVSPFMDAPVQVDNKTGTATLHYANTVSSSMASLTLVKPPPQNATHIVSKFTDSLHSLNSKEYPANVPQTVDHSLLLTVGVGVNPCPSCINGTRVVGTINNVTFIMPSTPILQAHYYNIPGVFTEDFPATPLHKFNYTGSGPKNLQTMNGTRVYRLPYNASVQVVLQDTGIISPESHPIHLHGFNFFVVGKGVGNYNPRTSPSTFNLIDPIERNTIGVPTGGWTAIRFRSDNPGVWFMHCHFEVHTSWGLKMAFVVDNGKRPSETLIPPPKDLPQC.

Positions 1 to 25 (MAVLPESRRLSLLLMAACFLLQALS) are cleaved as a signal peptide. Plastocyanin-like domains are found at residues 36–152 (NVVM…PKLG) and 162–314 (KEAV…YANT). 2 N-linked (GlcNAc...) asparagine glycosylation sites follow: Asn41 and Asn82. Cu cation is bound by residues His86 and His88. An N-linked (GlcNAc...) asparagine glycan is attached at Asn118. His131 and His133 together coordinate Cu cation. Residues Asn191, Asn302, Asn331, Asn379, Asn389, Asn424, Asn437, and Asn447 are each glycosylated (N-linked (GlcNAc...) asparagine). Residues 414-548 (DFPATPLHKF…KMAFVVDNGK (135 aa)) enclose the Plastocyanin-like 3 domain. The Cu cation site is built by His465, His468, His470, His527, Cys528, His529, and His533.

It belongs to the multicopper oxidase family. It depends on Cu cation as a cofactor.

The protein localises to the secreted. Its subcellular location is the extracellular space. It is found in the apoplast. The catalysed reaction is 4 hydroquinone + O2 = 4 benzosemiquinone + 2 H2O. Functionally, lignin degradation and detoxification of lignin-derived products. This Oryza sativa subsp. japonica (Rice) protein is Laccase-22 (LAC22).